The following is a 266-amino-acid chain: Type III pantothenate kinase (266 aa).

ATP is bound at residue 6-13 (DVGNSHTV). 112 to 115 (GIDR) provides a ligand contact to substrate. The active-site Proton acceptor is aspartate 114. Aspartate 134 serves as a coordination point for K(+). Threonine 137 contacts ATP. Threonine 190 is a binding site for substrate.

It belongs to the type III pantothenate kinase family. Homodimer. NH4(+) serves as cofactor. K(+) is required as a cofactor.

The protein resides in the cytoplasm. It catalyses the reaction (R)-pantothenate + ATP = (R)-4'-phosphopantothenate + ADP + H(+). Its pathway is cofactor biosynthesis; coenzyme A biosynthesis; CoA from (R)-pantothenate: step 1/5. Functionally, catalyzes the phosphorylation of pantothenate (Pan), the first step in CoA biosynthesis. This chain is Type III pantothenate kinase, found in Desulfotalea psychrophila (strain LSv54 / DSM 12343).